Reading from the N-terminus, the 551-residue chain is MRDYDEAIAFLGEWGPFQRLIFFLLSASIIPNGFNGMSVVFLAGTPEHRCRVPDAANLSSAWRNNSVPLRLRDGREVLHSCRRYRLATIANFSALGLEPGRDVDLGQLEQESCLDGWEFSQDVYWSTVVTEWNLVCEDNWKVPLTTSLFFVGVLLGSFVSGQLSDRFGRKNVLFATMAVQTGFSFLQIFSISWEMFTVLFLIVGMGQISNYVVAFILGTEILGKSVRIIFSTLGVCTFFAVGYMLLPLFAYFIRDWRMLLLALTVPGVLCVPLWWFIPESPRWLISQRRFREAEDIIQKAAKMNNIAVPAVIFDSVEELNPLKQQKAFILDLFRTWNIAIMTIMSLLLWMLTSVGYFALSLDTPNLHGDAYLNCFLSALIEIPAYITAWLLLRTLPRRYIIAAVLFWGGGVLLFIQLVPVDYYFLSIGLVMLGKFGITSAFSMLYVFTAELYPTMVRNMAVGVTSMASRVGSIIAPYFVYLGAYNRMLPYIVMGSLTVLIGILTLFFPESLGMTLPETLEQMQKVKWFRSGKKTRDSMETEENPKVLITAF.

Residues 1-20 lie on the Cytoplasmic side of the membrane; sequence MRDYDEAIAFLGEWGPFQRL. The chain crosses the membrane as a helical span at residues 21–41; the sequence is IFFLLSASIIPNGFNGMSVVF. Residues 42 to 141 lie on the Extracellular side of the membrane; the sequence is LAGTPEHRCR…WNLVCEDNWK (100 aa). Asn57, Asn64, and Asn91 each carry an N-linked (GlcNAc...) asparagine glycan. A helical membrane pass occupies residues 142–162; it reads VPLTTSLFFVGVLLGSFVSGQ. The Cytoplasmic portion of the chain corresponds to 163 to 171; the sequence is LSDRFGRKN. Residues 172 to 192 traverse the membrane as a helical segment; it reads VLFATMAVQTGFSFLQIFSIS. The Extracellular segment spans residues 193-197; the sequence is WEMFT. A helical transmembrane segment spans residues 198–218; it reads VLFLIVGMGQISNYVVAFILG. Position 218–225 (218–225) interacts with ATP; the sequence is GTEILGKS. Residues 219-232 are Cytoplasmic-facing; that stretch reads TEILGKSVRIIFST. The helical transmembrane segment at 233–253 threads the bilayer; the sequence is LGVCTFFAVGYMLLPLFAYFI. At 254-257 the chain is on the extracellular side; sequence RDWR. The helical transmembrane segment at 258 to 278 threads the bilayer; it reads MLLLALTVPGVLCVPLWWFIP. At 279–337 the chain is on the cytoplasmic side; it reads ESPRWLISQRRFREAEDIIQKAAKMNNIAVPAVIFDSVEELNPLKQQKAFILDLFRTWN. The chain crosses the membrane as a helical span at residues 338 to 358; the sequence is IAIMTIMSLLLWMLTSVGYFA. The Extracellular segment spans residues 359–371; sequence LSLDTPNLHGDAY. A helical membrane pass occupies residues 372 to 392; sequence LNCFLSALIEIPAYITAWLLL. Over 393-399 the chain is Cytoplasmic; it reads RTLPRRY. A helical transmembrane segment spans residues 400 to 420; the sequence is IIAAVLFWGGGVLLFIQLVPV. Residues 421–426 lie on the Extracellular side of the membrane; that stretch reads DYYFLS. The chain crosses the membrane as a helical span at residues 427 to 447; sequence IGLVMLGKFGITSAFSMLYVF. The Cytoplasmic portion of the chain corresponds to 448-460; it reads TAELYPTMVRNMA. Residues 461-481 traverse the membrane as a helical segment; that stretch reads VGVTSMASRVGSIIAPYFVYL. At 482-486 the chain is on the extracellular side; the sequence is GAYNR. A helical membrane pass occupies residues 487–507; that stretch reads MLPYIVMGSLTVLIGILTLFF. Residues 508 to 551 are Cytoplasmic-facing; it reads PESLGMTLPETLEQMQKVKWFRSGKKTRDSMETEENPKVLITAF.

Belongs to the major facilitator (TC 2.A.1) superfamily. Organic cation transporter (TC 2.A.1.19) family. In terms of assembly, interacts with PDZK1.

It localises to the apical cell membrane. The protein localises to the basal cell membrane. It is found in the mitochondrion membrane. It carries out the reaction ergothioneine(out) + Na(+)(out) = ergothioneine(in) + Na(+)(in). It catalyses the reaction acetylcholine(in) = acetylcholine(out). The enzyme catalyses (R)-carnitine(out) + Na(+)(out) = (R)-carnitine(in) + Na(+)(in). The catalysed reaction is glycine betaine(out) + Na(+)(out) = glycine betaine(in) + Na(+)(in). Its activity is regulated as follows. Allosterically activated by intracellular ATP. Transporter that mediates the transport of endogenous and microbial zwitterions and organic cations. Functions as a Na(+)-dependent and pH-dependent high affinity microbial symporter of potent food-derived antioxidant ergothioeine. Transports one sodium ion with one ergothioeine molecule. Involved in the absorption of ergothioneine from the luminal/apical side of the small intestine and renal tubular cells, and into non-parenchymal liver cells, thereby contributing to maintain steady-state ergothioneine level in the body. Also mediates the bidirectional transport of acetycholine, although the exact transport mechanism has not been fully identified yet. Most likely exports anti-inflammatory acetylcholine in non-neuronal tissues, thereby contributing to the non-neuronal cholinergic system. Displays a general physiological role linked to better survival by controlling inflammation and oxidative stress, which may be related to ergothioneine and acetycholine transports. May also function as a low-affinity Na(+)-dependent transporter of L-carnitine through the mitochondrial membrane, thereby maintaining intracellular carnitine homeostasis. May contribute to regulate the transport of cationic compounds in testis across the blood-testis-barrier. The polypeptide is Solute carrier family 22 member 4 (SLC22A4) (Papio anubis (Olive baboon)).